A 212-amino-acid polypeptide reads, in one-letter code: 3-isopropylmalate dehydratase small subunit (212 aa).

It belongs to the LeuD family. LeuD type 1 subfamily. Heterodimer of LeuC and LeuD.

It carries out the reaction (2R,3S)-3-isopropylmalate = (2S)-2-isopropylmalate. It participates in amino-acid biosynthesis; L-leucine biosynthesis; L-leucine from 3-methyl-2-oxobutanoate: step 2/4. Catalyzes the isomerization between 2-isopropylmalate and 3-isopropylmalate, via the formation of 2-isopropylmaleate. The chain is 3-isopropylmalate dehydratase small subunit from Beutenbergia cavernae (strain ATCC BAA-8 / DSM 12333 / CCUG 43141 / JCM 11478 / NBRC 16432 / NCIMB 13614 / HKI 0122).